Here is an 82-residue protein sequence, read N- to C-terminus: Sec-independent protein translocase protein TatA (82 aa).

The helical transmembrane segment at 1–21 threads the bilayer; the sequence is MGGISIWQLLIIAVIIVLLFG. Residues 48–82 form a disordered region; that stretch reads PAKEAKKDADFVPQNLEKKEAETVEKQKQNDKEQA.

Belongs to the TatA/E family. The Tat system comprises two distinct complexes: a TatABC complex, containing multiple copies of TatA, TatB and TatC subunits, and a separate TatA complex, containing only TatA subunits. Substrates initially bind to the TatABC complex, which probably triggers association of the separate TatA complex to form the active translocon.

The protein resides in the cell inner membrane. Its function is as follows. Part of the twin-arginine translocation (Tat) system that transports large folded proteins containing a characteristic twin-arginine motif in their signal peptide across membranes. TatA could form the protein-conducting channel of the Tat system. The chain is Sec-independent protein translocase protein TatA from Aliivibrio fischeri (strain ATCC 700601 / ES114) (Vibrio fischeri).